The chain runs to 504 residues: Histidine ammonia-lyase (504 aa).

The 5-imidazolinone (Ala-Gly) cross-link spans A141 to G143. S142 is subject to 2,3-didehydroalanine (Ser).

Belongs to the PAL/histidase family. Post-translationally, contains an active site 4-methylidene-imidazol-5-one (MIO), which is formed autocatalytically by cyclization and dehydration of residues Ala-Ser-Gly.

The protein resides in the cytoplasm. It carries out the reaction L-histidine = trans-urocanate + NH4(+). It functions in the pathway amino-acid degradation; L-histidine degradation into L-glutamate; N-formimidoyl-L-glutamate from L-histidine: step 1/3. The chain is Histidine ammonia-lyase from Geobacillus kaustophilus (strain HTA426).